The chain runs to 605 residues: Formin-binding protein 1-like (605 aa).

The 263-residue stretch at 1 to 263 (MSWGTELWDQ…AAKSVDERRD (263 aa)) folds into the F-BAR domain. Positions 66-258 (FTSCIAFFNI…EGMILAAKSV (193 aa)) form a coiled coil. The interaction with CDC42 stretch occupies residues 245–535 (SKCLEGMILA…EFDDEFEDDD (291 aa)). A Phosphoserine modification is found at Ser295. Residues 392–484 (LEDFSHLPPE…VEGKTGIRGD (93 aa)) adopt a coiled-coil conformation. The 78-residue stretch at 397–474 (HLPPEQRRKK…IHKNEAWLSE (78 aa)) folds into the REM-1 domain. Residues 482–538 (RGDRRHSSDINHLVTQGRESPEGSYTDDANQEVRGPPQQHGHHSEFDDEFEDDDPLP) are disordered. A phosphoserine mark is found at Ser488, Ser501, and Ser505. The segment at 522–605 (GHHSEFDDEF…VTLEKSSKGS (84 aa)) is interaction with DNM1. The segment covering 527 to 536 (FDDEFEDDDP) has biased composition (acidic residues). The SH3 domain maps to 538 to 599 (PAIGHCKAIY…PTTYIDVTLE (62 aa)). The interaction with DNM2 and WASL stretch occupies residues 541–597 (GHCKAIYPFDGHNEGTLAMKEGEVLYIIEEDKGDGWTRARRQNGEEGYVPTTYIDVT). Residues 541–605 (GHCKAIYPFD…VTLEKSSKGS (65 aa)) form an interaction with DAAM1, DIAPH1 and DIAPH2 region.

This sequence belongs to the FNBP1 family. As to quaternary structure, homodimerizes, the dimers can polymerize end-to-end to form filamentous structures. Interacts with GTP-bound CDC42. Interacts with DAAM1, DIAPH1, DIAPH2, DNM1, DNM2 and WASL/N-WASP. Interacts with ATG3. Interacts (via SH3 domain) with ABI1, WASF2, CDC42 and WIPF1.

Its subcellular location is the cytoplasm. It is found in the cytoskeleton. It localises to the cell cortex. The protein resides in the cytoplasmic vesicle. The protein localises to the cell membrane. Functionally, required to coordinate membrane tubulation with reorganization of the actin cytoskeleton during endocytosis. May bind to lipids such as phosphatidylinositol 4,5-bisphosphate and phosphatidylserine and promote membrane invagination and the formation of tubules. Also promotes CDC42-induced actin polymerization by activating the WASL-WASPIP complex, the predominant form of WASL/N-WASP in cells. Actin polymerization may promote the fission of membrane tubules to form endocytic vesicles. Essential for autophagy of intracellular bacterial pathogens. This Mus musculus (Mouse) protein is Formin-binding protein 1-like (Fnbp1l).